The sequence spans 696 residues: Glycine--tRNA ligase beta subunit (696 aa).

Belongs to the class-II aminoacyl-tRNA synthetase family. Tetramer of two alpha and two beta subunits.

It localises to the cytoplasm. The catalysed reaction is tRNA(Gly) + glycine + ATP = glycyl-tRNA(Gly) + AMP + diphosphate. This is Glycine--tRNA ligase beta subunit from Nitratidesulfovibrio vulgaris (strain DP4) (Desulfovibrio vulgaris).